The sequence spans 198 residues: Recombination protein RecR (198 aa).

The C4-type zinc-finger motif lies at Cys-59 to Cys-74. A Toprim domain is found at Thr-82–Pro-175.

The protein belongs to the RecR family.

Its function is as follows. May play a role in DNA repair. It seems to be involved in an RecBC-independent recombinational process of DNA repair. It may act with RecF and RecO. In Desulfitobacterium hafniense (strain Y51), this protein is Recombination protein RecR.